Here is a 67-residue protein sequence, read N- to C-terminus: Large ribosomal subunit protein bL35 (67 aa).

The protein belongs to the bacterial ribosomal protein bL35 family.

This chain is Large ribosomal subunit protein bL35, found in Bartonella tribocorum (strain CIP 105476 / IBS 506).